A 501-amino-acid polypeptide reads, in one-letter code: Cilia- and flagella-associated protein 45 (501 aa).

Residues 75 to 114 (MTAEDVAAAKREAEAKREQLQAVSKARKEKMLKLEEEAKK) adopt a coiled-coil conformation.

This sequence belongs to the CFAP45 family.

The protein localises to the cell projection. Its subcellular location is the cilium. It localises to the flagellum. This Chlamydomonas reinhardtii (Chlamydomonas smithii) protein is Cilia- and flagella-associated protein 45.